The chain runs to 160 residues: Cyclic pyranopterin monophosphate synthase (160 aa).

Substrate-binding positions include 76 to 78 and 114 to 115; these read LCH and ME. Aspartate 129 is an active-site residue.

The protein belongs to the MoaC family. Homohexamer; trimer of dimers.

The catalysed reaction is (8S)-3',8-cyclo-7,8-dihydroguanosine 5'-triphosphate = cyclic pyranopterin phosphate + diphosphate. It functions in the pathway cofactor biosynthesis; molybdopterin biosynthesis. Its function is as follows. Catalyzes the conversion of (8S)-3',8-cyclo-7,8-dihydroguanosine 5'-triphosphate to cyclic pyranopterin monophosphate (cPMP). In Vibrio cholerae serotype O1 (strain ATCC 39541 / Classical Ogawa 395 / O395), this protein is Cyclic pyranopterin monophosphate synthase.